The following is a 219-amino-acid chain: uncharacterized protein (219 aa).

Ser23 bears the Phosphoserine mark. A Glycyl lysine isopeptide (Lys-Gly) (interchain with G-Cter in SUMO) cross-link involves residue Lys137.

It localises to the cytoplasm. This is an uncharacterized protein from Saccharomyces cerevisiae (strain ATCC 204508 / S288c) (Baker's yeast).